The following is a 334-amino-acid chain: Cytochrome c551 peroxidase (334 aa).

A signal peptide spans 1-26 (MIKRTLTVSLLSLSLGAMFASAGVMA). Residues cysteine 65, cysteine 68, histidine 69, cysteine 209, cysteine 212, histidine 213, histidine 270, and methionine 284 each coordinate heme c. A disordered region spans residues 315-334 (FKLPILPPSNNDTPRSQPYE). Residues 322-334 (PSNNDTPRSQPYE) are compositionally biased toward polar residues.

In terms of processing, binds 2 heme c groups covalently per subunit.

Its subcellular location is the periplasm. The catalysed reaction is 2 Fe(II)-[cytochrome c] + H2O2 + 2 H(+) = 2 Fe(III)-[cytochrome c] + 2 H2O. This is Cytochrome c551 peroxidase (ccp) from Nitrosomonas europaea (strain ATCC 19718 / CIP 103999 / KCTC 2705 / NBRC 14298).